Consider the following 38-residue polypeptide: MTQSNPNEQDVELNRTSLYWGLLLIFVLAVLFSNYFFN.

A helical membrane pass occupies residues 17 to 37 (SLYWGLLLIFVLAVLFSNYFF).

It belongs to the PsbL family. As to quaternary structure, PSII is composed of 1 copy each of membrane proteins PsbA, PsbB, PsbC, PsbD, PsbE, PsbF, PsbH, PsbI, PsbJ, PsbK, PsbL, PsbM, PsbT, PsbX, PsbY, PsbZ, Psb30/Ycf12, at least 3 peripheral proteins of the oxygen-evolving complex and a large number of cofactors. It forms dimeric complexes.

It is found in the plastid. It localises to the chloroplast thylakoid membrane. One of the components of the core complex of photosystem II (PSII). PSII is a light-driven water:plastoquinone oxidoreductase that uses light energy to abstract electrons from H(2)O, generating O(2) and a proton gradient subsequently used for ATP formation. It consists of a core antenna complex that captures photons, and an electron transfer chain that converts photonic excitation into a charge separation. This subunit is found at the monomer-monomer interface and is required for correct PSII assembly and/or dimerization. This Oenothera argillicola (Appalachian evening primrose) protein is Photosystem II reaction center protein L.